Here is a 192-residue protein sequence, read N- to C-terminus: Transcription termination/antitermination protein NusG (192 aa).

Residues 140 to 168 enclose the KOW domain; it reads VGEVVTVTDGPFETFMGTVEEIDKERNRL.

This sequence belongs to the NusG family.

Functionally, participates in transcription elongation, termination and antitermination. The protein is Transcription termination/antitermination protein NusG of Rickettsia typhi (strain ATCC VR-144 / Wilmington).